A 338-amino-acid polypeptide reads, in one-letter code: Ketol-acid reductoisomerase (NADP(+)) (338 aa).

Residues 1-181 enclose the KARI N-terminal Rossmann domain; that stretch reads MKVYYDKDCN…GGGRSGIIET (181 aa). NADP(+) is bound by residues 24-27, Arg-47, Ser-50, Ser-52, and 82-85; these read YGSQ and DETQ. His-107 is a catalytic residue. Gly-133 serves as a coordination point for NADP(+). The region spanning 182–327 is the KARI C-terminal knotted domain; that stretch reads NFREETETDL…ARLRAMMPWI (146 aa). Positions 190, 194, 226, and 230 each coordinate Mg(2+). Residue Ser-251 coordinates substrate.

Belongs to the ketol-acid reductoisomerase family. It depends on Mg(2+) as a cofactor.

It carries out the reaction (2R)-2,3-dihydroxy-3-methylbutanoate + NADP(+) = (2S)-2-acetolactate + NADPH + H(+). The catalysed reaction is (2R,3R)-2,3-dihydroxy-3-methylpentanoate + NADP(+) = (S)-2-ethyl-2-hydroxy-3-oxobutanoate + NADPH + H(+). The protein operates within amino-acid biosynthesis; L-isoleucine biosynthesis; L-isoleucine from 2-oxobutanoate: step 2/4. It functions in the pathway amino-acid biosynthesis; L-valine biosynthesis; L-valine from pyruvate: step 2/4. Involved in the biosynthesis of branched-chain amino acids (BCAA). Catalyzes an alkyl-migration followed by a ketol-acid reduction of (S)-2-acetolactate (S2AL) to yield (R)-2,3-dihydroxy-isovalerate. In the isomerase reaction, S2AL is rearranged via a Mg-dependent methyl migration to produce 3-hydroxy-3-methyl-2-ketobutyrate (HMKB). In the reductase reaction, this 2-ketoacid undergoes a metal-dependent reduction by NADPH to yield (R)-2,3-dihydroxy-isovalerate. The chain is Ketol-acid reductoisomerase (NADP(+)) from Pelobacter propionicus (strain DSM 2379 / NBRC 103807 / OttBd1).